The primary structure comprises 365 residues: Peptide chain release factor 2 (365 aa).

Glutamine 252 is modified (N5-methylglutamine).

Belongs to the prokaryotic/mitochondrial release factor family. Methylated by PrmC. Methylation increases the termination efficiency of RF2.

It localises to the cytoplasm. Functionally, peptide chain release factor 2 directs the termination of translation in response to the peptide chain termination codons UGA and UAA. The polypeptide is Peptide chain release factor 2 (Escherichia coli O8 (strain IAI1)).